We begin with the raw amino-acid sequence, 1748 residues long: Flagellar attachment zone protein 1 (1748 aa).

Coiled coils occupy residues 613 to 657 (REQE…KLQK), 684 to 864 (VTLD…HKVR), and 903 to 1663 (NDHM…SALE). A run of 41 repeats spans residues 1012–1025 (EELE…EKLA), 1026–1039 (EELE…EKLA), 1040–1053 (EELE…EKLA), 1054–1067 (EALD…EKLA), 1068–1081 (EELE…EKLA), 1082–1095 (EELE…EKLA), 1096–1109 (EELE…EKLA), 1110–1123 (EELE…EKLA), 1124–1137 (EELE…EKLA), 1138–1151 (EELE…EKLA), 1152–1165 (EALD…EKLA), 1166–1179 (EELD…EKLA), 1180–1193 (EELE…EKLA), 1194–1207 (EELE…EKLA), 1208–1221 (EELE…EKLA), 1222–1235 (EELE…EKLA), 1236–1249 (EELE…EKLA), 1250–1263 (EELE…EKLA), 1264–1277 (EELE…EKLA), 1278–1291 (EELE…EKLA), 1292–1305 (EELE…EKLA), 1306–1319 (EELE…EKLA), 1320–1333 (EELE…EKLA), 1334–1347 (EELE…EKLA), 1348–1361 (EELE…EKLA), 1362–1375 (EELE…EKLA), 1376–1389 (EELE…EKLA), 1390–1403 (EELE…EKLA), 1404–1417 (EELE…EKLA), 1418–1431 (EELE…EKLA), 1432–1445 (EELE…EKLA), 1446–1459 (EELE…EKLA), 1460–1473 (EELE…EKLA), 1474–1487 (EELE…EKLA), 1488–1501 (EELE…EKLA), 1502–1515 (EELE…EKLA), 1516–1529 (EELE…EKLA), 1530–1543 (EELE…EKLA), 1544–1557 (EELE…EKLA), 1558–1571 (EELE…EKLA), and 1572–1585 (EELE…KRLA). Positions 1012–1529 (EELELKAAEN…LKAAENEKLA (518 aa)) are 41 X 14 AA tandem repeats of E-E-L-E-L-K-[VA]-A-E-N-E-K-L-A.

It is found in the cell projection. Its subcellular location is the cilium. It localises to the flagellum. In terms of biological role, a component of FAZ filament that is required for correct FAZ assembly and attachment. Not essential for new flagellum growth. This chain is Flagellar attachment zone protein 1, found in Trypanosoma brucei gambiense (strain MHOM/CI/86/DAL972).